Consider the following 492-residue polypeptide: Fibroblast growth factor receptor substrate 3 (492 aa).

A lipid anchor (N-myristoyl glycine) is attached at Gly2. An IRS-type PTB domain is found at 13 to 115; the sequence is VPHNHPTKFK…QCNSINVTEE (103 aa). Disordered regions lie at residues 125 to 205, 337 to 413, and 425 to 492; these read PQEL…EDRR, QQLR…EPPR, and WGTA…DLPL. 2 stretches are compositionally biased toward polar residues: residues 133 to 147 and 166 to 185; these read GSSQPTGYTVSSFSN and PSTSSLRHPSPGEESTQTLI. The span at 374-385 shows a compositional bias: low complexity; that stretch reads TSTRASARSHSS.

In terms of assembly, binds NTRK1, FGFR1, NGFR, GRB2, PTPN11 and ERK2. Post-translationally, phosphorylated on tyrosine residues upon stimulation by BFGF or NGFB.

Its subcellular location is the membrane. Its function is as follows. Adapter protein that links FGF and NGF receptors to downstream signaling pathways. Involved in the activation of MAP kinases. Down-regulates ERK2 signaling by interfering with the phosphorylation and nuclear translocation of ERK2. The chain is Fibroblast growth factor receptor substrate 3 (Frs3) from Rattus norvegicus (Rat).